Consider the following 472-residue polypeptide: Bifunctional protein HldE (472 aa).

Residues 1-315 are ribokinase; sequence MAKRVKILVV…QLLNSSFGAN (315 aa). ATP is bound at residue 192 to 195; sequence NKKE. Residue Asp-260 is part of the active site. A cytidylyltransferase region spans residues 340–472; it reads FTNGCFDILH…IKDAKNDDKK (133 aa).

This sequence in the N-terminal section; belongs to the carbohydrate kinase PfkB family. In the C-terminal section; belongs to the cytidylyltransferase family. In terms of assembly, homodimer.

It carries out the reaction D-glycero-beta-D-manno-heptose 7-phosphate + ATP = D-glycero-beta-D-manno-heptose 1,7-bisphosphate + ADP + H(+). The enzyme catalyses D-glycero-beta-D-manno-heptose 1-phosphate + ATP + H(+) = ADP-D-glycero-beta-D-manno-heptose + diphosphate. It participates in nucleotide-sugar biosynthesis; ADP-L-glycero-beta-D-manno-heptose biosynthesis; ADP-L-glycero-beta-D-manno-heptose from D-glycero-beta-D-manno-heptose 7-phosphate: step 1/4. The protein operates within nucleotide-sugar biosynthesis; ADP-L-glycero-beta-D-manno-heptose biosynthesis; ADP-L-glycero-beta-D-manno-heptose from D-glycero-beta-D-manno-heptose 7-phosphate: step 3/4. Its function is as follows. Catalyzes the phosphorylation of D-glycero-D-manno-heptose 7-phosphate at the C-1 position to selectively form D-glycero-beta-D-manno-heptose-1,7-bisphosphate. Functionally, catalyzes the ADP transfer from ATP to D-glycero-beta-D-manno-heptose 1-phosphate, yielding ADP-D-glycero-beta-D-manno-heptose. The polypeptide is Bifunctional protein HldE (Campylobacter concisus (strain 13826)).